Consider the following 502-residue polypeptide: Probable cytosol aminopeptidase (502 aa).

2 residues coordinate Mn(2+): lysine 269 and aspartate 274. The active site involves lysine 281. Mn(2+) contacts are provided by aspartate 292, aspartate 351, and glutamate 353. Arginine 355 is a catalytic residue.

This sequence belongs to the peptidase M17 family. It depends on Mn(2+) as a cofactor.

Its subcellular location is the cytoplasm. The catalysed reaction is Release of an N-terminal amino acid, Xaa-|-Yaa-, in which Xaa is preferably Leu, but may be other amino acids including Pro although not Arg or Lys, and Yaa may be Pro. Amino acid amides and methyl esters are also readily hydrolyzed, but rates on arylamides are exceedingly low.. The enzyme catalyses Release of an N-terminal amino acid, preferentially leucine, but not glutamic or aspartic acids.. In terms of biological role, presumably involved in the processing and regular turnover of intracellular proteins. Catalyzes the removal of unsubstituted N-terminal amino acids from various peptides. The polypeptide is Probable cytosol aminopeptidase (Shewanella piezotolerans (strain WP3 / JCM 13877)).